The following is a 618-amino-acid chain: MINTLDRYKDVYDIKNMSLDELNLLSRELRNFIIESVSQNGGHLASNLGVVELTLSLYNVFDFSYDKLIWDVGHQCYVHKILTGRRSGFQNLRKINGLSGFPKRCESKFDHFETGHSSTSISSALGMARARDLKGENYNVVAVIGDGALTGGMALEALNDVGDNKTKLTIILNDNQMSIGKNVGGLSTYLSSLRIDPNYNKFKRDVEGIIKKIPNIGKGVAKNLERVKDGVKQVLVPGMLFENMGIKYFGPIDGHNIKQLSKVMDKAKNMKEPVIIHVVTTKGKGYKFAEQNPDKFHGIGSFDYMTGCSKKSKGVTYSKAFGKAMVSIASKDKRVVAITAAMKDGTGLNEFSNKFKNRIFDVGIAEQHAVTMAAGMATAGLRPVFSVYSTFLQRAYDQVLHDVCIQNLPVVFAIDRAGLVGEDGETHQGVFDMSYLSHMPNMTIMAPKCVEELEFMLNWALSQESPIAIRYPKGESRLNLKPIKNFQKGKWEVLEDKGKISIIATGRMVEKAFNVKETLKERNIDIGLINATFVKPIDKEMLNKIIDEEKTIITLEDNVILGGFGNSVLNYVRDTNSNIKVVNLGFKDEFIPHGKVDDLFKMYGLDEEAILKEVMKLM.

Thiamine diphosphate-binding positions include histidine 74 and 115 to 117 (GHS). Residue aspartate 146 participates in Mg(2+) binding. Thiamine diphosphate-binding positions include 147 to 148 (GA), asparagine 175, tyrosine 286, and glutamate 366. A Mg(2+)-binding site is contributed by asparagine 175.

It belongs to the transketolase family. DXPS subfamily. Homodimer. Mg(2+) serves as cofactor. Thiamine diphosphate is required as a cofactor.

It carries out the reaction D-glyceraldehyde 3-phosphate + pyruvate + H(+) = 1-deoxy-D-xylulose 5-phosphate + CO2. It functions in the pathway metabolic intermediate biosynthesis; 1-deoxy-D-xylulose 5-phosphate biosynthesis; 1-deoxy-D-xylulose 5-phosphate from D-glyceraldehyde 3-phosphate and pyruvate: step 1/1. Its function is as follows. Catalyzes the acyloin condensation reaction between C atoms 2 and 3 of pyruvate and glyceraldehyde 3-phosphate to yield 1-deoxy-D-xylulose-5-phosphate (DXP). This is 1-deoxy-D-xylulose-5-phosphate synthase from Clostridium tetani (strain Massachusetts / E88).